The chain runs to 691 residues: Glycine--tRNA ligase beta subunit (691 aa).

Belongs to the class-II aminoacyl-tRNA synthetase family. In terms of assembly, tetramer of two alpha and two beta subunits.

The protein localises to the cytoplasm. The enzyme catalyses tRNA(Gly) + glycine + ATP = glycyl-tRNA(Gly) + AMP + diphosphate. The protein is Glycine--tRNA ligase beta subunit of Levilactobacillus brevis (strain ATCC 367 / BCRC 12310 / CIP 105137 / JCM 1170 / LMG 11437 / NCIMB 947 / NCTC 947) (Lactobacillus brevis).